The primary structure comprises 117 residues: Photosystem II reaction center Psb28 protein (117 aa).

It belongs to the Psb28 family. In terms of assembly, part of the photosystem II complex.

It is found in the cellular thylakoid membrane. This chain is Photosystem II reaction center Psb28 protein, found in Prochlorococcus marinus (strain MIT 9301).